Here is a 52-residue protein sequence, read N- to C-terminus: Large ribosomal subunit protein bL33 (52 aa).

It belongs to the bacterial ribosomal protein bL33 family.

The polypeptide is Large ribosomal subunit protein bL33 (Chlamydia abortus (strain DSM 27085 / S26/3) (Chlamydophila abortus)).